A 129-amino-acid chain; its full sequence is Glycine cleavage system H protein (129 aa).

Residues 24-106 (TYTVGITEHA…YAGGWIFKIK (83 aa)) form the Lipoyl-binding domain. N6-lipoyllysine is present on Lys-65.

Belongs to the GcvH family. In terms of assembly, the glycine cleavage system is composed of four proteins: P, T, L and H. Requires (R)-lipoate as cofactor.

Functionally, the glycine cleavage system catalyzes the degradation of glycine. The H protein shuttles the methylamine group of glycine from the P protein to the T protein. The protein is Glycine cleavage system H protein of Citrobacter koseri (strain ATCC BAA-895 / CDC 4225-83 / SGSC4696).